The following is a 552-amino-acid chain: MSTTATVATTPEGIPVIILKEGSSRTYGKEALRINIAAVKAVEEALKSTYGPRGMDKMLVDSLGDITITNDGATILDKMDLQHPAAKLLVQIAKGQDEETADGTKTAVILAGELVKKAEELLYKEIHPTIIVSGFKKAEEQALKTIEEIAQKVSVNDMDILKKVAMTSLNSKAVAGAREYLADIVAKAVTQVAELRGDRWYVDLDNIQIVKKHGGSINDTQIIYGIVVDKEVVHPGMPKRVENAKIALLDASLEVEKPELDAEIRINDPTQMKKFLEEEENLLKEKVDKIAATGANVVICQKGIDEVAQHYLAKKGILAVRRAKKSDLEKLARATGGRVVSNIDELTPQDLGYAALVEERKVGEDKMVFVEGAKNPKAVSILIRGGLERVVDETERALRDALGTVADVIRDGRAVAGGGAVELEIAKRLRKYAPQIGGKEQLAIEAYASALENLVMILIENGGYDPIDLLVKLRSAHENEANKWYGINVFTGQVEDMWKLGVIEPAVVKMNAIKAATEAATLILRIDDLIAAGKKSESKGGESKSEEKKEED.

It belongs to the TCP-1 chaperonin family. Forms a Heterooligomeric complex of two stacked nine-membered rings; one of alpha and the other of beta subunits. The N-terminus is blocked.

In terms of biological role, molecular chaperone; binds unfolded polypeptides in vitro, and has a weak ATPase activity. In Sulfurisphaera tokodaii (strain DSM 16993 / JCM 10545 / NBRC 100140 / 7) (Sulfolobus tokodaii), this protein is Thermosome subunit beta (thsB).